A 373-amino-acid chain; its full sequence is Dual-specificity RNA methyltransferase RlmN (373 aa).

The Proton acceptor role is filled by glutamate 94. Positions 100 to 339 (EDDRATLCVS…VIVRKTRGDD (240 aa)) constitute a Radical SAM core domain. Cysteine 107 and cysteine 344 are oxidised to a cystine. [4Fe-4S] cluster-binding residues include cysteine 114, cysteine 118, and cysteine 121. S-adenosyl-L-methionine-binding positions include 168 to 169 (GE), serine 200, 222 to 224 (SIH), and asparagine 301. The S-methylcysteine intermediate role is filled by cysteine 344.

It belongs to the radical SAM superfamily. RlmN family. It depends on [4Fe-4S] cluster as a cofactor.

It localises to the cytoplasm. The enzyme catalyses adenosine(2503) in 23S rRNA + 2 reduced [2Fe-2S]-[ferredoxin] + 2 S-adenosyl-L-methionine = 2-methyladenosine(2503) in 23S rRNA + 5'-deoxyadenosine + L-methionine + 2 oxidized [2Fe-2S]-[ferredoxin] + S-adenosyl-L-homocysteine. The catalysed reaction is adenosine(37) in tRNA + 2 reduced [2Fe-2S]-[ferredoxin] + 2 S-adenosyl-L-methionine = 2-methyladenosine(37) in tRNA + 5'-deoxyadenosine + L-methionine + 2 oxidized [2Fe-2S]-[ferredoxin] + S-adenosyl-L-homocysteine. Functionally, specifically methylates position 2 of adenine 2503 in 23S rRNA and position 2 of adenine 37 in tRNAs. m2A2503 modification seems to play a crucial role in the proofreading step occurring at the peptidyl transferase center and thus would serve to optimize ribosomal fidelity. This is Dual-specificity RNA methyltransferase RlmN from Shewanella baltica (strain OS223).